A 1946-amino-acid polypeptide reads, in one-letter code: Chromodomain-helicase-DNA-binding protein 5 (1946 aa).

Disordered regions lie at residues 1 to 140 (MRGP…SGQL), 236 to 272 (VPQT…GRGK), and 285 to 340 (SKRK…GDGY). Composition is skewed to acidic residues over residues 17–37 (EEME…EGFE) and 72–90 (NDEM…ESEG). Composition is skewed to basic residues over residues 96–118 (TKKK…KRKK) and 254–272 (GVRK…GRGK). Residues 293-303 (SEEDEREDSDL) are compositionally biased toward acidic residues. Over residues 323–332 (KKNKRRRKKK) the composition is skewed to basic residues. 2 consecutive PHD-type zinc fingers follow at residues 345-392 (QDYC…CEKE) and 418-465 (MEFC…CTCP). The histone-binding stretch occupies residues 345–655 (QDYCEVCQQG…HRELMLGEDA (311 aa)). The region spanning 499 to 556 (MPPPRPLEGIPEREFFVKWAGLSYWHCSWVKELQLELYHTVMYRNYQRKNDMDEPPPF) is the Chromo 1 domain. The disordered stretch occupies residues 551-573 (DEPPPFDYGSGDEDGKSEKRKNK). The span at 563-573 (EDGKSEKRKNK) shows a compositional bias: basic and acidic residues. A Chromo 2 domain is found at 594–655 (MMVHRILNHS…HRELMLGEDA (62 aa)). Residues 714–898 (RFSWAQGTDT…FHLLNFLTPE (185 aa)) form the Helicase ATP-binding domain. Position 727–734 (727–734 (DEMGLGKT)) interacts with ATP. Residues 849-852 (DEAH) carry the DEAH box motif. The Helicase C-terminal domain occupies 1030 to 1195 (LLQKMLKKLR…MTKQELDDIL (166 aa)). Disordered regions lie at residues 1210 to 1254 (MMSQ…VEDS), 1353 to 1413 (YNDA…LPPL), 1525 to 1566 (KYST…APLG), 1579 to 1696 (DEKE…EDKN), and 1926 to 1946 (SFPA…LQPF). The segment covering 1212 to 1230 (SQGQRPTTPIPDIQSTKGG) has biased composition (polar residues). Composition is skewed to acidic residues over residues 1357–1368 (SQEDQEWQDELS) and 1378–1387 (SEDEDEDFEE). Gln1392 bears the N5-methylglutamine mark. Residues 1551-1564 (TPVPASPAQLPPAP) show a composition bias toward pro residues. Ser1556 carries the phosphoserine modification. 3 stretches are compositionally biased toward basic and acidic residues: residues 1602–1629 (DRVE…EVEK), 1637–1654 (PLKE…DKPE), and 1661–1676 (GDFR…KEPG).

This sequence belongs to the SNF2/RAD54 helicase family. In terms of assembly, component of the nucleosome remodeling and deacetylase (NuRD) repressor complex, composed of core proteins MTA1, MTA2, MTA3, RBBP4, RBBP7, HDAC1, HDAC2, MBD2, MBD3, and peripherally associated proteins CDK2AP1, CDK2AP2, GATAD2A, GATAD2B, CHD3, CHD4 and CHD5. The exact stoichiometry of the NuRD complex is unknown, and some subunits such as MBD2 and MBD3, GATAD2A and GATAD2B, and CHD3, CHD4 and CHD5 define mutually exclusive NuRD complexes. Interacts with HDAC2. In terms of processing, methylated at Gln-1392 by N6AMT1. As to expression, specifically expressed by neurons in brain, retina and adrenal gland (at protein level). Also detected in testis.

The protein localises to the nucleus. It is found in the chromosome. It carries out the reaction ATP + H2O = ADP + phosphate + H(+). Functionally, ATP-dependent chromatin-remodeling factor that binds DNA through histones and regulates gene transcription. May specifically recognize and bind trimethylated 'Lys-27' (H3K27me3) and non-methylated 'Lys-4' of histone H3. Acts as a component of the histone deacetylase NuRD complex which participates in the remodeling of chromatin. Plays a role in the development of the nervous system by activating the expression of genes promoting neuron terminal differentiation. In parallel, it may also positively regulate the trimethylation of histone H3 at 'Lys-27' thereby specifically repressing genes that promote the differentiation into non-neuronal cell lineages. Regulates the expression of genes involved in cell proliferation and differentiation. Downstream activated genes may include CDKN2A that positively regulates the p53/TP53 pathway, which in turn, prevents cell proliferation. In spermatogenesis, it probably regulates histone hyperacetylation and the replacement of histones by transition proteins in chromatin, a crucial step in the condensation of spermatid chromatin and the production of functional spermatozoa. The chain is Chromodomain-helicase-DNA-binding protein 5 (Chd5) from Mus musculus (Mouse).